A 1624-amino-acid polypeptide reads, in one-letter code: ATP-binding cassette sub-family A member 9 (1624 aa).

Residues 31-51 (LLEWLFSFLLVLFLYLFFSNL) form a helical membrane-spanning segment. N120 and N195 each carry an N-linked (GlcNAc...) asparagine glycan. A run of 6 helical transmembrane segments spans residues 221 to 243 (VATDFFIFFCIISFSTFIYYVSV), 269 to 289 (SWGLMYAGFILIMATLMALIV), 300 to 320 (FVMVFTLFLLYGLSLITLAFL), 329 to 349 (FLTGLVVFLLIVFWGILGFPA), 354 to 374 (LPAFLEWTLCLLSPFAFTVGM), and 398 to 418 (LIIATLFMLVFDTLLYLVLTL). Residues 481–716 (IRIKNLKKEY…WGIGYHLSLH (236 aa)) enclose the ABC transporter 1 domain. An ATP-binding site is contributed by 517–524 (GHSGAGKT). The chain crosses the membrane as a helical span at residues 864 to 884 (LWTILLLFGISFIPQLLEHLF). The N-linked (GlcNAc...) asparagine glycan is linked to N949. Helical transmembrane passes span 1026 to 1046 (TFFWIPMAASFTPYIAMSSIG), 1065 to 1085 (AYWFGQALVDVSLYFLILLLM), 1108 to 1128 (ILCSIGYVSSLVFLTYVISFI), 1136 to 1156 (SGIWSFFFLIVVIFSIVATDL), 1163 to 1183 (GLFFGTMLIPPFTLIGSLFIF), and 1200 to 1220 (EIVYLALLIPYLHFLIFLFIL). The ABC transporter 2 domain maps to 1288 to 1521 (LRKEYAGKKK…FGKDYLLEMK (234 aa)). Residue 1326–1333 (GHNGAGKS) coordinates ATP.

Belongs to the ABC transporter superfamily. ABCA family. As to expression, widely expressed with higher expression in heart.

It localises to the membrane. Transporter that may play a role in monocyte differentiation and lipid transport and homeostasis. In Homo sapiens (Human), this protein is ATP-binding cassette sub-family A member 9 (ABCA9).